The primary structure comprises 287 residues: Pantothenate synthetase (287 aa).

An ATP-binding site is contributed by 30–37; sequence MGNLHSGH. The active-site Proton donor is the His-37. Gln-61 is a binding site for (R)-pantoate. Gln-61 is a binding site for beta-alanine. 149 to 152 contacts ATP; that stretch reads GEKD. A (R)-pantoate-binding site is contributed by Gln-155. ATP-binding positions include Val-178 and 186–189; that span reads LSSR.

It belongs to the pantothenate synthetase family. As to quaternary structure, homodimer.

It localises to the cytoplasm. The catalysed reaction is (R)-pantoate + beta-alanine + ATP = (R)-pantothenate + AMP + diphosphate + H(+). Its pathway is cofactor biosynthesis; (R)-pantothenate biosynthesis; (R)-pantothenate from (R)-pantoate and beta-alanine: step 1/1. Its function is as follows. Catalyzes the condensation of pantoate with beta-alanine in an ATP-dependent reaction via a pantoyl-adenylate intermediate. The protein is Pantothenate synthetase of Pseudomonas putida (strain ATCC 47054 / DSM 6125 / CFBP 8728 / NCIMB 11950 / KT2440).